Consider the following 222-residue polypeptide: RING finger protein 141 (222 aa).

The segment at 147-184 (CCICMDGKADLILPCAHSFCQKCIDKWSGQSRNCPVCR) adopts an RING-type zinc-finger fold.

The sequence is that of RING finger protein 141 (rnf141) from Danio rerio (Zebrafish).